Here is a 113-residue protein sequence, read N- to C-terminus: Large ribosomal subunit protein bL17 (113 aa).

It belongs to the bacterial ribosomal protein bL17 family. As to quaternary structure, part of the 50S ribosomal subunit. Contacts protein L32.

This is Large ribosomal subunit protein bL17 from Symbiobacterium thermophilum (strain DSM 24528 / JCM 14929 / IAM 14863 / T).